Consider the following 245-residue polypeptide: Enolase-phosphatase E1 (245 aa).

Positions 14 and 16 each coordinate Mg(2+). Residues 141 to 142 (SS) and K175 each bind substrate. A Mg(2+)-binding site is contributed by D200.

This sequence belongs to the HAD-like hydrolase superfamily. MasA/MtnC family. In terms of assembly, monomer. Requires Mg(2+) as cofactor.

The protein localises to the cytoplasm. It is found in the nucleus. The enzyme catalyses 5-methylsulfanyl-2,3-dioxopentyl phosphate + H2O = 1,2-dihydroxy-5-(methylsulfanyl)pent-1-en-3-one + phosphate. Its pathway is amino-acid biosynthesis; L-methionine biosynthesis via salvage pathway; L-methionine from S-methyl-5-thio-alpha-D-ribose 1-phosphate: step 3/6. It functions in the pathway amino-acid biosynthesis; L-methionine biosynthesis via salvage pathway; L-methionine from S-methyl-5-thio-alpha-D-ribose 1-phosphate: step 4/6. Bifunctional enzyme that catalyzes the enolization of 2,3-diketo-5-methylthiopentyl-1-phosphate (DK-MTP-1-P) into the intermediate 2-hydroxy-3-keto-5-methylthiopentenyl-1-phosphate (HK-MTPenyl-1-P), which is then dephosphorylated to form the acireductone 1,2-dihydroxy-3-keto-5-methylthiopentene (DHK-MTPene). In Drosophila grimshawi (Hawaiian fruit fly), this protein is Enolase-phosphatase E1.